Here is a 96-residue protein sequence, read N- to C-terminus: Nucleoid-associated protein CT_335 (96 aa).

It belongs to the YbaB/EbfC family. Homodimer.

It localises to the cytoplasm. Its subcellular location is the nucleoid. Binds to DNA and alters its conformation. May be involved in regulation of gene expression, nucleoid organization and DNA protection. The chain is Nucleoid-associated protein CT_335 from Chlamydia trachomatis serovar D (strain ATCC VR-885 / DSM 19411 / UW-3/Cx).